Reading from the N-terminus, the 443-residue chain is Chromosomal replication initiator protein DnaA (443 aa).

Residues 1-73 (MYGDYRQIWE…YDAASKVTNR (73 aa)) are domain I, interacts with DnaA modulators. The tract at residues 73-106 (RFIEIKILSEDEEEYREIKESIERENSSESTLLS) is domain II. The tract at residues 107 to 323 (TLNPKYTFDT…GALIRIVAFA (217 aa)) is domain III, AAA+ region. Residues glycine 151, glycine 153, lysine 154, and threonine 155 each coordinate ATP. A domain IV, binds dsDNA region spans residues 324–443 (TLTKSNIDLE…EELKKRIKGY (120 aa)).

Belongs to the DnaA family. As to quaternary structure, oligomerizes as a right-handed, spiral filament on DNA at oriC.

It localises to the cytoplasm. Functionally, plays an essential role in the initiation and regulation of chromosomal replication. ATP-DnaA binds to the origin of replication (oriC) to initiate formation of the DNA replication initiation complex once per cell cycle. Binds the DnaA box (a 9 base pair repeat at the origin) and separates the double-stranded (ds)DNA. Forms a right-handed helical filament on oriC DNA; dsDNA binds to the exterior of the filament while single-stranded (ss)DNA is stabiized in the filament's interior. The ATP-DnaA-oriC complex binds and stabilizes one strand of the AT-rich DNA unwinding element (DUE), permitting loading of DNA polymerase. After initiation quickly degrades to an ADP-DnaA complex that is not apt for DNA replication. Binds acidic phospholipids. The polypeptide is Chromosomal replication initiator protein DnaA (Caldanaerobacter subterraneus subsp. tengcongensis (strain DSM 15242 / JCM 11007 / NBRC 100824 / MB4) (Thermoanaerobacter tengcongensis)).